Here is a 366-residue protein sequence, read N- to C-terminus: tRNA (guanine(26)-N(2))-dimethyltransferase (366 aa).

The interval 1-28 (MEVSEGSVTVEVPEERHGASEGSGEGVF) is disordered. The 365-residue stretch at 1-365 (MEVSEGSVTV…ADVADIRNAV (365 aa)) folds into the Trm1 methyltransferase domain. Residues Arg37, Arg64, and Asp79 each contribute to the S-adenosyl-L-methionine site. Cys234, Cys237, Cys254, and Cys257 together coordinate Zn(2+).

Belongs to the class I-like SAM-binding methyltransferase superfamily. Trm1 family.

The enzyme catalyses guanosine(26) in tRNA + 2 S-adenosyl-L-methionine = N(2)-dimethylguanosine(26) in tRNA + 2 S-adenosyl-L-homocysteine + 2 H(+). Functionally, dimethylates a single guanine residue at position 26 of a number of tRNAs using S-adenosyl-L-methionine as donor of the methyl groups. The chain is tRNA (guanine(26)-N(2))-dimethyltransferase from Natronomonas pharaonis (strain ATCC 35678 / DSM 2160 / CIP 103997 / JCM 8858 / NBRC 14720 / NCIMB 2260 / Gabara) (Halobacterium pharaonis).